Here is a 255-residue protein sequence, read N- to C-terminus: Protein YIPF7 (255 aa).

Topologically, residues 1–124 (MSNLGQFDSD…ADGSIMNETD (124 aa)) are cytoplasmic. A helical membrane pass occupies residues 125–145 (LTGPILFCMALGATLLLAGKV). Glutamine 146 is a topological domain (lumenal). Residues 147–167 (FGYVYGMSAIGCLGIHALLNL) form a helical membrane-spanning segment. The Cytoplasmic segment spans residues 168–180 (MSSSGVSYGCVAS). The chain crosses the membrane as a helical span at residues 181 to 201 (VLGYCLLPMVILSSCAIFFSL). The Lumenal portion of the chain corresponds to 202–204 (QGT). Residues 205-225 (FGTVSALVIIGWCSLSASKIF) form a helical membrane-spanning segment. Residues 226–234 (TSALAMEGQ) lie on the Cytoplasmic side of the membrane. The helical transmembrane segment at 235–255 (QLLIAYPCALLYGLFALVTVF) threads the bilayer.

This sequence belongs to the YIP1 family.

It is found in the endoplasmic reticulum membrane. The protein resides in the golgi apparatus. The protein localises to the cis-Golgi network membrane. Its subcellular location is the trans-Golgi network membrane. The protein is Protein YIPF7 (YIPF7) of Bos taurus (Bovine).